The following is a 342-amino-acid chain: Trans-3-hydroxy-L-proline dehydratase (342 aa).

Ser90 acts as the Proton acceptor in catalysis. Substrate contacts are provided by residues 91 to 92, Asp251, and 256 to 257; these read GS and GT.

The protein belongs to the proline racemase family.

It catalyses the reaction trans-3-hydroxy-L-proline = 1-pyrroline-2-carboxylate + H2O. Its function is as follows. Catalyzes the dehydration of trans-3-hydroxy-L-proline (t3LHyp) to Delta(1)-pyrroline-2-carboxylate (Pyr2C). Is likely involved in a degradation pathway that converts t3LHyp to L-proline, which would allow P.denitrificans to grow on t3LHyp as a sole carbon source. Displays neither proline racemase activity nor 4-hydroxyproline 2-epimerase activity. The polypeptide is Trans-3-hydroxy-L-proline dehydratase (Paracoccus denitrificans (strain Pd 1222)).